The following is a 583-amino-acid chain: Zinc finger protein 277 (583 aa).

2 C2H2-type zinc fingers span residues 351–375 and 482–508; these read LQCLYCEKTFRDKNTLKDHMRKKQH and HQCKCYSCHVKFKSKADLRTHMEDTKH.

Belongs to the ZNF277 family. Interacts (via zinc-finger domains) with RPS2/40S ribosomal protein S2, perhaps as nascent RPS2 is synthesized during translation; the interaction is direct; the interaction is extra-ribosomal. Interaction with RPS2 competes with the binding of RPS2 to protein arginine methyltransferase PRMT3. Interacts with Polycomb group (PcG) complex protein BMI1. May be part of a complex including at least ZNF277, BMI1 and RNF2/RING2.

It is found in the nucleus. The protein resides in the cytoplasm. Its subcellular location is the nucleolus. It localises to the chromosome. Functionally, probable transcription factor. Involved in modulation of cellular senescence; represses transcription of the tumor suppressor gene INK4A/ARF, perhaps acting via the Polycomb group (PcG) complex PRC1. In Mus musculus (Mouse), this protein is Zinc finger protein 277.